The primary structure comprises 199 residues: TATA-box-binding protein (199 aa).

A run of 2 repeats spans residues 10–86 (IENI…VKLL) and 101–177 (VQNI…YNQL).

This sequence belongs to the TBP family.

Its function is as follows. General factor that plays a role in the activation of archaeal genes transcribed by RNA polymerase. Binds specifically to the TATA box promoter element which lies close to the position of transcription initiation. The polypeptide is TATA-box-binding protein (Pyrobaculum islandicum (strain DSM 4184 / JCM 9189 / GEO3)).